Consider the following 370-residue polypeptide: MSDKIKDKVDLLGMDRAELTEFFASIGEKPFRAAQVMKWIHQFGVSDFEEMTNISKSLREKLSKTALIRTPKIVSEQRSADGTIKWLLEVDNHNCVEAVFIPEKSRGTLCISSQVGCALECSFCSTGQQGFNRNLENWEIVAQMWVANKALGCKPKEERIISNVVFMGMGEPLLNVKHTFPTARILMDDNAYGLSKRRVTISTAGVVPAIDKIKESLDVSLAISLHAPNNALRDELVPINKKYPLEVLMPALHRYVEGGHSKKHVTVEYVMLDHVNDRLEHAQQLIELLGDLPCKVNLIPFNPFPNTDYKRSSNNAVHRFKDALMEAGVNCTVRRTRGDDIDAACGQLAGKVKDRTKRTLQTVNLDKLHG.

Catalysis depends on glutamate 97, which acts as the Proton acceptor. The Radical SAM core domain maps to 103–340 (EKSRGTLCIS…CTVRRTRGDD (238 aa)). Cysteine 110 and cysteine 345 are oxidised to a cystine. Residues cysteine 117, cysteine 121, and cysteine 124 each coordinate [4Fe-4S] cluster. S-adenosyl-L-methionine-binding positions include 170–171 (GE), serine 202, 224–226 (SLH), and asparagine 302. Residue cysteine 345 is the S-methylcysteine intermediate of the active site.

The protein belongs to the radical SAM superfamily. RlmN family. [4Fe-4S] cluster is required as a cofactor.

The protein localises to the cytoplasm. It catalyses the reaction adenosine(2503) in 23S rRNA + 2 reduced [2Fe-2S]-[ferredoxin] + 2 S-adenosyl-L-methionine = 2-methyladenosine(2503) in 23S rRNA + 5'-deoxyadenosine + L-methionine + 2 oxidized [2Fe-2S]-[ferredoxin] + S-adenosyl-L-homocysteine. The catalysed reaction is adenosine(37) in tRNA + 2 reduced [2Fe-2S]-[ferredoxin] + 2 S-adenosyl-L-methionine = 2-methyladenosine(37) in tRNA + 5'-deoxyadenosine + L-methionine + 2 oxidized [2Fe-2S]-[ferredoxin] + S-adenosyl-L-homocysteine. Its function is as follows. Specifically methylates position 2 of adenine 2503 in 23S rRNA and position 2 of adenine 37 in tRNAs. m2A2503 modification seems to play a crucial role in the proofreading step occurring at the peptidyl transferase center and thus would serve to optimize ribosomal fidelity. This Hydrogenovibrio crunogenus (strain DSM 25203 / XCL-2) (Thiomicrospira crunogena) protein is Dual-specificity RNA methyltransferase RlmN.